Here is a 601-residue protein sequence, read N- to C-terminus: Proteasome-associated ATPase (601 aa).

Over residues 1–15 (MSGPRSGSGSGGSTG) the composition is skewed to gly residues. A disordered region spans residues 1 to 29 (MSGPRSGSGSGGSTGRPGDADSQRSAYEK). The segment covering 18-29 (GDADSQRSAYEK) has biased composition (basic and acidic residues). Residues 19-106 (DADSQRSAYE…LKEEVDRLAQ (88 aa)) adopt a coiled-coil conformation. Residue 289 to 294 (GCGKTL) coordinates ATP. The docks into pockets in the proteasome alpha-ring stretch occupies residues 600-601 (YL).

It belongs to the AAA ATPase family. Homohexamer. Assembles into a hexameric ring structure that caps the 20S proteasome core. Strongly interacts with the prokaryotic ubiquitin-like protein Pup through a hydrophobic interface; the interacting region of ARC lies in its N-terminal coiled-coil domain. There is one Pup binding site per ARC hexamer ring. Upon ATP-binding, the C-terminus of ARC interacts with the alpha-rings of the proteasome core, possibly by binding to the intersubunit pockets.

It functions in the pathway protein degradation; proteasomal Pup-dependent pathway. ATPase which is responsible for recognizing, binding, unfolding and translocation of pupylated proteins into the bacterial 20S proteasome core particle. May be essential for opening the gate of the 20S proteasome via an interaction with its C-terminus, thereby allowing substrate entry and access to the site of proteolysis. Thus, the C-termini of the proteasomal ATPase may function like a 'key in a lock' to induce gate opening and therefore regulate proteolysis. In Parafrankia sp. (strain EAN1pec), this protein is Proteasome-associated ATPase.